The chain runs to 165 residues: Cysteine-rich hydrophobic domain-containing protein 2 (165 aa).

Positions 1-26 (MADFDEIYEEEEDEERALEEQLLKYS) form a coiled coil. The CHIC motif (Cys-rich) motif lies at 88–106 (CGCLCCCCTLGCSMWPVIC).

It belongs to the CHIC family. Palmitoylation in the CHIC motif is required for membrane association.

It is found in the cell membrane. The protein resides in the cytoplasmic vesicle. The sequence is that of Cysteine-rich hydrophobic domain-containing protein 2 (CHIC2) from Homo sapiens (Human).